Consider the following 874-residue polypeptide: Alanine--tRNA ligase (874 aa).

Residues His562, His566, Cys664, and His668 each coordinate Zn(2+).

It belongs to the class-II aminoacyl-tRNA synthetase family. Zn(2+) serves as cofactor.

The protein resides in the cytoplasm. It carries out the reaction tRNA(Ala) + L-alanine + ATP = L-alanyl-tRNA(Ala) + AMP + diphosphate. Catalyzes the attachment of alanine to tRNA(Ala) in a two-step reaction: alanine is first activated by ATP to form Ala-AMP and then transferred to the acceptor end of tRNA(Ala). Also edits incorrectly charged Ser-tRNA(Ala) and Gly-tRNA(Ala) via its editing domain. This is Alanine--tRNA ligase from Shewanella baltica (strain OS155 / ATCC BAA-1091).